The primary structure comprises 438 residues: Minor myo-inositol transporter IolF (438 aa).

Helical transmembrane passes span isoleucine 15–leucine 35, isoleucine 49–glycine 69, methionine 86–leucine 106, glycine 108–alanine 128, tryptophan 147–leucine 167, isoleucine 171–proline 191, isoleucine 230–phenylalanine 250, leucine 268–phenylalanine 288, threonine 295–leucine 312, glycine 317–alanine 334, leucine 359–isoleucine 379, and methionine 387–proline 407.

It belongs to the major facilitator superfamily. Sugar transporter (TC 2.A.1.1) family.

The protein localises to the cell membrane. It participates in polyol metabolism; myo-inositol degradation into acetyl-CoA. Its function is as follows. Minor myo-inositol uptake transporter. This Bacillus subtilis (strain 168) protein is Minor myo-inositol transporter IolF (iolF).